Reading from the N-terminus, the 309-residue chain is MNKYDLIERLNNRFTALEAGLQALHQQLEDLPLLAARVFSLPEIEKGTEHQPIMHIPVNATVGAAARDLAIQHYQRLFIHHQGQNVSSKAALRLPGVLCFSVTESQLATCQKSIQHINQLKTELEHIITVESGLPSEQRFEFVHTHLHGLITLNTYRTITPLINPSSVRFGWANKHIIKNVTREDVLAQLNKSLNAGRAVPPFSREQWVELISQEINDVQRLPEQARLKIKRPVKVQPIARVWYQEQQKQVQHPCPMPLIAFCQLQSAAELPKLGELTDYDANQIKHKYKPDAKPLQLLVPRLHLYLEI.

It belongs to the Tus family.

It localises to the cytoplasm. Trans-acting protein required for termination of DNA replication. Binds to DNA replication terminator sequences (terA to terF) to prevent the passage of replication forks. The termination efficiency will be affected by the affinity of this protein for the terminator sequence. This chain is DNA replication terminus site-binding protein, found in Yersinia enterocolitica serotype O:8 / biotype 1B (strain NCTC 13174 / 8081).